The chain runs to 162 residues: MPCSEDAAAVSASKRARAEDGASLRFVRLSEHATAPTRGSARAAGYDLFSAYDYTISPMEKAIVKTDIQIAVPSGCYGRVAPRSGLAVKHFIDVGAGVIDEDYRGNVGVVLFNFGKEKFEVKKGDRIAQLICERISYPDLEEVQTLDDTERGSGGFGSTGKN.

S11 carries the phosphoserine modification. Residues 83-85, 97-103, G108, R151, and 156-157 each bind dUTP; these read RSG, GVIDEDY, and FG.

This sequence belongs to the dUTPase family. As to quaternary structure, homotrimer. It depends on Mg(2+) as a cofactor. In terms of processing, phosphorylated in vivo on Ser-11, a reaction that can be catalyzed in vitro by CDC2.

It localises to the nucleus. The catalysed reaction is dUTP + H2O = dUMP + diphosphate + H(+). It participates in pyrimidine metabolism; dUMP biosynthesis; dUMP from dCTP (dUTP route): step 2/2. Catalyzes the cleavage of 2'-deoxyuridine 5'-triphosphate (dUTP) into 2'-deoxyuridine 5'-monophosphate (dUMP) and inorganic pyrophosphate and through its action efficiently prevents uracil misincorporation into DNA and at the same time provides dUMP, the substrate for de novo thymidylate biosynthesis. Inhibits peroxisome proliferator-activated receptor (PPAR) activity by binding of its N-terminal to PPAR, preventing the latter's dimerization with retinoid X receptor. Essential for embryonic development. The chain is Deoxyuridine 5'-triphosphate nucleotidohydrolase (Dut) from Mus musculus (Mouse).